Reading from the N-terminus, the 188-residue chain is Putative pre-16S rRNA nuclease (188 aa).

The segment at 156 to 188 (LRQGDAAPGGSDDERDEDGDTDGEDGGGDGGGE) is disordered. Residues 166-188 (SDDERDEDGDTDGEDGGGDGGGE) are compositionally biased toward acidic residues.

It belongs to the YqgF nuclease family.

Its subcellular location is the cytoplasm. In terms of biological role, could be a nuclease involved in processing of the 5'-end of pre-16S rRNA. The sequence is that of Putative pre-16S rRNA nuclease from Rhodospirillum centenum (strain ATCC 51521 / SW).